We begin with the raw amino-acid sequence, 1729 residues long: Cullin-7 (1729 aa).

The tract at residues 350 to 388 (DRPRSSARSPGSIFQPQLADVSPGLPATQAQPSFRRSRH) is disordered. Ser371 carries the phosphoserine modification. The CPH domain maps to 392–465 (RSEFASGNTY…HWHMLEILGF (74 aa)). Over residues 632 to 642 (SEDAAKVEAKE) the composition is skewed to basic and acidic residues. The segment at 632 to 654 (SEDAAKVEAKEPPSQSPNTPLQR) is disordered. Residues 845–1024 (PINIPFFDVF…HTRLFYMVRA (180 aa)) enclose the DOC domain. Positions 1373–1405 (VGHGASGKEHKSEKEEEAGAAAAVDVAEGEEEE) are disordered. Lys1607 is covalently cross-linked (Glycyl lysine isopeptide (Lys-Gly) (interchain with G-Cter in NEDD8)).

Belongs to the cullin family. As to quaternary structure, component of the 3M complex, composed of core components CUL7, CCDC8 and OBSL1. Component of the Cul7-RING(FBXW8) complex consisting of CUL7, RBX1, SKP1 and FBXW8. Within the Cul7-RING(FBXW8) complex interacts with FBXW8 and RBX1, but not with SKP1. Interacts with CUL1 (via the C-terminal domain); the interaction seems to be mediated by FBXW8; it is likely specific to FBXW8, but not other F-box proteins. Interacts (via the CPH domain) with p53/TP53; the interaction preferentially involves tetrameric and dimeric p53/TP53; this interaction recruits p53/TP53 for ubiquitination by neddylated CUL1-RBX1. The CUL7-CUL9 heterodimer seems to interact specifically with p53/TP53. Interacts with FBXW8; interaction is mutually exclusive of binding to CUL9 or p53/TP53. Interacts with CUL9; leading to inhibited CUL9 activity. Interacts with OBSL1. Interacts (as part of the 3M complex) with HDAC4 and HDAC5; it is negatively regulated by ANKRA2.

The protein resides in the cytoplasm. It localises to the cytoskeleton. The protein localises to the microtubule organizing center. Its subcellular location is the centrosome. It is found in the perinuclear region. The protein resides in the golgi apparatus. The protein operates within protein modification; protein ubiquitination. Functionally, core component of the 3M and Cul7-RING(FBXW8) complexes, which mediate the ubiquitination and subsequent proteasomal degradation of target proteins. Core component of the 3M complex, a complex required to regulate microtubule dynamics and genome integrity. It is unclear how the 3M complex regulates microtubules, it could act by controlling the level of a microtubule stabilizer. The Cul7-RING(FBXW8) complex alone lacks ubiquitination activity and does not promote polyubiquitination and proteasomal degradation of p53/TP53. However it mediates recruitment of p53/TP53 for ubiquitination by neddylated CUL1-RBX1. Interaction with CUL9 is required to inhibit CUL9 activity and ubiquitination of BIRC5. The Cul7-RING(FBXW8) complex also mediates ubiquitination and consequent degradation of target proteins such as GORASP1, IRS1 and MAP4K1/HPK1. Ubiquitination of GORASP1 regulates Golgi morphogenesis and dendrite patterning in brain. Mediates ubiquitination and degradation of IRS1 in a mTOR-dependent manner: the Cul7-RING(FBXW8) complex recognizes and binds IRS1 previously phosphorylated by S6 kinase (RPS6KB1 or RPS6KB2). The Cul7-RING(FBXW8) complex also mediates ubiquitination of MAP4K1/HPK1: recognizes and binds autophosphorylated MAP4K1/HPK1, leading to its degradation, thereby affecting cell proliferation and differentiation. Acts as a regulator in trophoblast cell epithelial-mesenchymal transition and placental development. While the Cul7-RING(FBXW8) and the 3M complexes are associated and involved in common processes, CUL7 and the Cul7-RING(FBXW8) complex may have additional functions. Probably plays a role in the degradation of proteins involved in endothelial proliferation and/or differentiation. The chain is Cullin-7 (CUL7) from Pongo abelii (Sumatran orangutan).